The primary structure comprises 191 residues: Calcium and integrin-binding protein 1 (191 aa).

G2 carries N-myristoyl glycine lipidation. EF-hand domains follow at residues 103 to 138 and 148 to 183; these read TPDI…LTGE and EMKQ…SPDF. D116, D118, D120, T122, D127, D161, D163, D165, T167, and E172 together coordinate Ca(2+). The residue at position 118 (D118) is a Phosphoserine.

In terms of assembly, monomer. Interacts with MYO1C. Interacts (via C-terminal region) with PPP3R1 and CACNA1C; the interactions increase upon cardiomyocytes hypertrophy. Interacts with the heterodimeric integrin alpha-IIb/beta3 (ITGA2B-ITGB3). Interacts with ITGA2B (via cytoplasmic domain); the interaction is direct and calcium-dependent. Interacts with the protein kinases PLK2/SNK and PRKDC (via the region immediately upstream of the kinase domain). Interacts with PLK3; the interaction inhibits PLK3 kinase activity. Interacts with PSEN2. Interacts (via C-terminus) with F8. Interacts with NBR1 (via C-terminus). Interacts with FEZ1 (via C-terminus). Interacts with UBR5 (via C-terminus); the interaction is sensitive to DNA damage, and may target CIB1 for ubiquitin-mediated degradation. Interacts with IFI6; the interaction is direct. Interacts with BCL2. Interacts with ITPR3; the interaction occurs in a calcium-dependent manner. Interacts with PTK2/FAK1. Interacts with MAP3K5; the interaction inhibits MAP3K5 activation by phosphorylation, and its subsequent interaction with TRAF2. Isoform 2 interacts with PRKD2 (via N-terminal AP-rich region), PTK2/FAK1 and PAK1. Interacts with TAS1R2 (via C-terminus); the interaction is independent of the myristoylation state of CIB1. Interacts (via C-terminal region) with STMN2 (via the N-terminal region); the interaction is direct, occurs in a calcium-dependent manner and attenuates the STMN2-induced neurite outgrowth inhibition. Interacts with SPHK1, the interaction occurs in a calcium-dependent manner. Interacts with ITGA2B (via C-terminal cytoplasmic tail); the interaction occurs upon platelet aggregation and is stabilized/increased in a calcium and magnesium-dependent manner. Interacts with PAK1 (via N-terminal region); the interaction is direct and occurs in a calcium-dependent manner. Interacts with RAC3 (via C-terminal region); the interaction induces their association with the cytoskeleton upon alpha-IIb/beta3 integrin-mediated adhesion. Interacts with ITGA5 and ITGAV. Interacts and forms a complex with TMC6 and TMC8; the interaction stabilizes each component of the complex. As to quaternary structure, (Microbial infection) Interacts with human papillomavirus 4/HPV4 protein E8, human papillomavirus 5/HPV5 protein E1, and human papillomavirus 16/HPV16 proteins E2 and E5. Post-translationally, phosphorylation of isoform 2 at Ser-118 by PRKD2 increases its ability to stimulate tumor angiogenesis. As to expression, ubiquitously expressed. Expressed in the epidermis, hair follicles and keratinocytes. Detected in platelets and in cell lines of megakaryocytic and erythrocytic lineages. Both isoform 1 and isoform 2 are detected in various cancer cell lines, with isoform 2 being the predominant form (at protein level).

The protein localises to the membrane. It is found in the cell membrane. It localises to the sarcolemma. Its subcellular location is the apical cell membrane. The protein resides in the cell projection. The protein localises to the ruffle membrane. It is found in the filopodium tip. It localises to the growth cone. Its subcellular location is the lamellipodium. The protein resides in the cytoplasm. The protein localises to the cytoskeleton. It is found in the microtubule organizing center. It localises to the centrosome. Its subcellular location is the perinuclear region. The protein resides in the nucleus. The protein localises to the neuron projection. It is found in the perikaryon. It localises to the golgi apparatus. Its subcellular location is the trans-Golgi network. Functionally, calcium-binding protein that plays a role in the regulation of numerous cellular processes, such as cell differentiation, cell division, cell proliferation, cell migration, thrombosis, angiogenesis, cardiac hypertrophy and apoptosis. Involved in bone marrow megakaryocyte differentiation by negatively regulating thrombopoietin-mediated signaling pathway. Participates in the endomitotic cell cycle of megakaryocyte, a form of mitosis in which both karyokinesis and cytokinesis are interrupted. Plays a role in integrin signaling by negatively regulating alpha-IIb/beta3 activation in thrombin-stimulated megakaryocytes preventing platelet aggregation. Up-regulates PTK2/FAK1 activity, and is also needed for the recruitment of PTK2/FAK1 to focal adhesions; it thus appears to play an important role in focal adhesion formation. Positively regulates cell migration on fibronectin in a CDC42-dependent manner, the effect being negatively regulated by PAK1. Functions as a negative regulator of stress activated MAP kinase (MAPK) signaling pathways. Down-regulates inositol 1,4,5-trisphosphate receptor-dependent calcium signaling. Involved in sphingosine kinase SPHK1 translocation to the plasma membrane in a N-myristoylation-dependent manner preventing TNF-alpha-induced apoptosis. Regulates serine/threonine-protein kinase PLK3 activity for proper completion of cell division progression. Plays a role in microtubule (MT) dynamics during neuronal development; disrupts the MT depolymerization activity of STMN2 attenuating NGF-induced neurite outgrowth and the MT reorganization at the edge of lamellipodia. Promotes cardiomyocyte hypertrophy via activation of the calcineurin/NFAT signaling pathway. Stimulates calcineurin PPP3R1 activity by mediating its anchoring to the sarcolemma. In ischemia-induced (pathological or adaptive) angiogenesis, stimulates endothelial cell proliferation, migration and microvessel formation by activating the PAK1 and ERK1/ERK2 signaling pathway. Also promotes cancer cell survival and proliferation. May regulate cell cycle and differentiation of spermatogenic germ cells, and/or differentiation of supporting Sertoli cells. Forms a complex with TMC6/EVER1 and TMC8/EVER2 in lymphocytes and keratynocytes where CIB1 stabilizes TMC6 and TMC8 levels and reciprocally. Its function is as follows. Acts as a restriction factor that promotes keratinocyte-intrinsic immunity to human beta-papillomaviruses (HPVs). In terms of biological role, plays a regulatory role in angiogenesis and tumor growth by mediating PKD/PRKD2-induced vascular endothelial growth factor A (VEGFA) secretion. This is Calcium and integrin-binding protein 1 (CIB1) from Homo sapiens (Human).